The following is a 431-amino-acid chain: STE20-related kinase adapter protein alpha (431 aa).

2 positions are modified to phosphoserine: serine 2 and serine 46. One can recognise a Protein kinase domain in the interval 69–379 (YELLTVIGKG…ASTLLNHSFF (311 aa)). Residues 310 to 347 (LTMSPSRSVANSGLSDSLTTSTPRPSNGDSPSHPYHRT) are disordered. The span at 312–339 (MSPSRSVANSGLSDSLTTSTPRPSNGDS) shows a compositional bias: polar residues. Phosphothreonine; by LKB1 is present on residues threonine 329 and threonine 419.

Belongs to the protein kinase superfamily. STE Ser/Thr protein kinase family. STE20 subfamily. Component of a trimeric complex composed of STK11/LKB1, STRAD (STRADA or STRADB) and CAB39/MO25 (CAB39/MO25alpha or CAB39L/MO25beta): the complex tethers STK11/LKB1 in the cytoplasm and stimulates its catalytic activity.

It localises to the nucleus. Its subcellular location is the cytoplasm. Its function is as follows. Pseudokinase which, in complex with CAB39/MO25 (CAB39/MO25alpha or CAB39L/MO25beta), binds to and activates STK11/LKB1. Adopts a closed conformation typical of active protein kinases and binds STK11/LKB1 as a pseudosubstrate, promoting conformational change of STK11/LKB1 in an active conformation. The protein is STE20-related kinase adapter protein alpha (STRADA) of Homo sapiens (Human).